A 338-amino-acid chain; its full sequence is DNA-directed RNA polymerase I subunit RPA43 (338 aa).

Residues 209–338 form a disordered region; it reads EVSEEVTENG…PKRKGKSNFL (130 aa). Ser242, Ser304, and Ser316 each carry phosphoserine. Thr322 carries the post-translational modification Phosphothreonine. Residue Ser328 is modified to Phosphoserine. Residues 328–338 show a composition bias toward basic residues; that stretch reads SPKRKGKSNFL.

Belongs to the eukaryotic RPA43 RNA polymerase subunit family. In terms of assembly, component of the RNA polymerase I (Pol I) complex consisting of 13 subunits: a ten-subunit catalytic core composed of POLR1A/RPA1, POLR1B/RPA2, POLR1C/RPAC1, POLR1D/RPAC2, POLR1H/RPA12, POLR2E/RPABC1, POLR2F/RPABC2, POLR2H/RPABC3, POLR2K/RPABC4 and POLR2L/RPABC5; a mobile stalk subunit POLR1F/RPA43 protruding from the core and additional subunits homologous to general transcription factors POLR1E/RPA49 and POLR1G/RPA34. Interacts with RRN3/TIF-IA. In terms of tissue distribution, widely expressed. Expressed in all fetal and adult tissues tested, with highest expression in fetal lung, liver, and kidney, and low expression in all adult tissues.

The protein resides in the nucleus. It localises to the nucleolus. In terms of biological role, component of RNA polymerase I (Pol I), a DNA-dependent RNA polymerase which synthesizes ribosomal RNA precursors using the four ribonucleoside triphosphates as substrates. Through its association with RRN3/TIF-IA may be involved in recruitment of Pol I to rDNA promoters. This chain is DNA-directed RNA polymerase I subunit RPA43, found in Homo sapiens (Human).